The sequence spans 299 residues: MNSPPVDAMITGESSSQRSIPTPFLTKTFNLVEDSSIDDVISWNEDGSSFIVWNPTDFAKDLLPKHFKHNNFSSFVRQLNTYGFKKVVPDRWEFSNDFFKRGEKRLLREIQRRKITTTHQTVVAPSSEQRNQTMVVSPSNSGEDNNNNQVMSSSPSSWYCHQTKTTGNGGLSVELLEENEKLRSQNIQLNRELTQMKSICDNIYSLMSNYVGSQPTDRSYSPGGSSSQPMEFLPAKRFSEMEIEEEEEASPRLFGVPIGLKRTRSEGVQVKTTAVVGENSDEETPWLRHYNRTNQRVCN.

Residues 21 to 115 (PTPFLTKTFN…LLREIQRRKI (95 aa)) mediate DNA binding. The tract at residues 119 to 157 (HQTVVAPSSEQRNQTMVVSPSNSGEDNNNNQVMSSSPSS) is disordered. The tract at residues 166 to 211 (TGNGGLSVELLEENEKLRSQNIQLNRELTQMKSICDNIYSLMSNYV) is hydrophobic repeat HR-A/B. The Nuclear localization signal motif lies at 261 to 264 (KRTR).

This sequence belongs to the HSF family. Class B subfamily. In terms of assembly, homotrimer. In terms of processing, exhibits temperature-dependent phosphorylation.

Its subcellular location is the nucleus. Functionally, transcriptional regulator that specifically binds DNA sequence 5'-AGAAnnTTCT-3' known as heat shock promoter elements (HSE). This Arabidopsis thaliana (Mouse-ear cress) protein is Heat stress transcription factor B-2a (HSFB2A).